The primary structure comprises 1043 residues: Calcium-transporting ATPase 1, plasma membrane-type (1043 aa).

Over 1 to 178 (MSFIRKKSME…FLWDASQDMT (178 aa)) the chain is Cytoplasmic. Transmembrane regions (helical) follow at residues 179–199 (LLLL…TEGW) and 202–222 (GMYD…ITAA). The Cytoplasmic segment spans residues 223-258 (SDYKQSLQFRDLDKEKKKIDVQVTRDGYRQKVSIYD). 2 consecutive transmembrane segments (helical) span residues 259-279 (IVVG…DGLF) and 356-376 (VATI…TVLM). The Cytoplasmic segment spans residues 377 to 395 (ARFLLGKAGAPGGLLRWRM). The chain crosses the membrane as a helical span at residues 396–416 (VDALAVLNFFAVAVTIIVVAV). Residue aspartate 460 is the 4-aspartylphosphate intermediate of the active site. Mg(2+) contacts are provided by aspartate 761 and aspartate 765. Residues 824 to 844 (LTVNVVALMVNFISASFTGSA) traverse the membrane as a helical segment. Position 845 (proline 845) is a topological domain, cytoplasmic. 2 helical membrane-spanning segments follow: residues 846–866 (LTIV…ALAL) and 891–911 (VMWR…GVLL). Residues 912 to 955 (LRGKSLLQINGPQADSLLNTFVFNTFVFCQVFNEVNSREMEKIN) are Cytoplasmic-facing. 2 consecutive transmembrane segments (helical) span residues 956–976 (VFSG…TAGF) and 998–1018 (WLTS…LKCI). The Cytoplasmic segment spans residues 1019 to 1043 (PVESGSDASDRHDGYRPIPTGPSAV). The segment at 1023–1043 (GSDASDRHDGYRPIPTGPSAV) is disordered.

This sequence belongs to the cation transport ATPase (P-type) (TC 3.A.3) family. Type IIB subfamily.

Its subcellular location is the membrane. The catalysed reaction is Ca(2+)(in) + ATP + H2O = Ca(2+)(out) + ADP + phosphate + H(+). Its activity is regulated as follows. Activated by calmodulin. In terms of biological role, this magnesium-dependent enzyme catalyzes the hydrolysis of ATP coupled with the translocation of calcium from the cytosol out of the cell, into the endoplasmic reticulum, or into organelles. In Oryza sativa subsp. japonica (Rice), this protein is Calcium-transporting ATPase 1, plasma membrane-type.